The sequence spans 189 residues: MAALRMLWMGLVLLGLLGFPQTPAQGHDTVQPNFQQDKFLGRWYSAGLASNSSWFREKKAVLYMCKTVVAPSTEGGLNLTSTFLRKNQCETKIMVLQPAGAPGHYTYSSPHSGSIHSVSVVEANYDEYALLFSRGTKGPGQDFRMATLYSRTQTLKDELKEKFTTFSKAQGLTEEDIVFLPQPDKCIQE.

A signal peptide spans 1 to 24 (MAALRMLWMGLVLLGLLGFPQTPA). Glutamine 25 bears the Pyrrolidone carboxylic acid mark. Asparagine 51 carries N-linked (GlcNAc...) asparagine glycosylation. The active-site Nucleophile is cysteine 65. An N-linked (GlcNAc...) asparagine glycan is attached at asparagine 78. Cysteine 89 and cysteine 186 form a disulfide bridge.

It belongs to the calycin superfamily. Lipocalin family. In terms of assembly, monomer. As to expression, abundant in the brain and CNS, where it is expressed in tissues of the blood-brain barrier and secreted into the cerebro-spinal fluid. In the male reproductive system, it is expressed in the testis, efferent ducts and epididymis, and is secreted into the seminal fluid. In the eye, it is expressed in the pigmented epithelium of the retina and the nonpigmented epithelium of the ciliary body, and secreted into the aqueous humor. Low levels detected in various tissue fluids such as serum, normal urine, ascitic fluid and tear fluid. Also found in a number of other organs including the ear, heart and lung.

It is found in the rough endoplasmic reticulum. Its subcellular location is the nucleus membrane. The protein resides in the golgi apparatus. The protein localises to the cytoplasm. It localises to the perinuclear region. It is found in the secreted. It catalyses the reaction prostaglandin H2 = prostaglandin D2. Catalyzes the conversion of PGH2 to PGD2, a prostaglandin involved in smooth muscle contraction/relaxation and a potent inhibitor of platelet aggregation. Involved in a variety of CNS functions, such as sedation, NREM sleep and PGE2-induced allodynia, and may have an anti-apoptotic role in oligodendrocytes. Binds small non-substrate lipophilic molecules, including biliverdin, bilirubin, retinal, retinoic acid and thyroid hormone, and may act as a scavenger for harmful hydrophobic molecules and as a secretory retinoid and thyroid hormone transporter. Possibly involved in development and maintenance of the blood-brain, blood-retina, blood-aqueous humor and blood-testis barrier. It is likely to play important roles in both maturation and maintenance of the central nervous system and male reproductive system. Involved in PLA2G3-dependent maturation of mast cells. PLA2G3 is secreted by immature mast cells and acts on nearby fibroblasts upstream to PTDGS to synthesize PGD2, which in turn promotes mast cell maturation and degranulation via PTGDR. The polypeptide is Prostaglandin-H2 D-isomerase (Ptgds) (Mus musculus (Mouse)).